A 225-amino-acid polypeptide reads, in one-letter code: Histone-arginine methyltransferase METTL23 (225 aa).

Belongs to the methyltransferase superfamily. METTL23 family. In terms of assembly, interacts with HSPA5, HSP90B1, TUBULIN, UGGT1 and UGGT2. Interacts with TET3. Interacts with STPG4.

It is found in the nucleus. It localises to the cytoplasm. It catalyses the reaction L-arginyl-[protein] + 2 S-adenosyl-L-methionine = N(omega),N(omega)-dimethyl-L-arginyl-[protein] + 2 S-adenosyl-L-homocysteine + 2 H(+). In terms of biological role, histone methyltransferase that dimethylates histone H3 at 'Arg-17', forming asymmetric dimethylarginine (H3R17me2a), leading to activate transcription via chromatin remodeling. Maternal factor involved in epigenetic chromatin reprogramming of the paternal genome in the zygote: mediates H3R17me2a, promoting histone H3.3 incorporation in the male pronucleus, leading to TET3 recruitment and subsequent DNA demethylation. The sequence is that of Histone-arginine methyltransferase METTL23 from Rattus norvegicus (Rat).